Here is a 336-residue protein sequence, read N- to C-terminus: S-adenosylmethionine:tRNA ribosyltransferase-isomerase (336 aa).

This sequence belongs to the QueA family. Monomer.

It is found in the cytoplasm. It carries out the reaction 7-aminomethyl-7-carbaguanosine(34) in tRNA + S-adenosyl-L-methionine = epoxyqueuosine(34) in tRNA + adenine + L-methionine + 2 H(+). The protein operates within tRNA modification; tRNA-queuosine biosynthesis. Functionally, transfers and isomerizes the ribose moiety from AdoMet to the 7-aminomethyl group of 7-deazaguanine (preQ1-tRNA) to give epoxyqueuosine (oQ-tRNA). The protein is S-adenosylmethionine:tRNA ribosyltransferase-isomerase of Sulfurihydrogenibium sp. (strain YO3AOP1).